The following is an 828-amino-acid chain: Glycerol-3-phosphate acyltransferase (828 aa).

The short motif at 304-309 (CHRSHM) is the HXXXXD motif element. Residues 802 to 828 (SMPAETSNQPEAPETPETPEPEGKTES) are disordered.

The protein belongs to the GPAT/DAPAT family.

The protein resides in the cell inner membrane. It catalyses the reaction sn-glycerol 3-phosphate + an acyl-CoA = a 1-acyl-sn-glycero-3-phosphate + CoA. It participates in phospholipid metabolism; CDP-diacylglycerol biosynthesis; CDP-diacylglycerol from sn-glycerol 3-phosphate: step 1/3. The polypeptide is Glycerol-3-phosphate acyltransferase (Yersinia pseudotuberculosis serotype O:3 (strain YPIII)).